We begin with the raw amino-acid sequence, 159 residues long: CASP-like protein 1C1 (159 aa).

Residues 1 to 6 are Cytoplasmic-facing; it reads MAKIKR. The chain crosses the membrane as a helical span at residues 7–27; sequence IITTLVRLLVLGAALSATIVM. Topologically, residues 28-50 are extracellular; it reads VTSHDSAEVLNLSFDAKYTNARA. Asparagine 38 is a glycosylation site (N-linked (GlcNAc...) asparagine). The chain crosses the membrane as a helical span at residues 51 to 73; that stretch reads FVYFAITNAIASGYSFIALFLSF. The Cytoplasmic segment spans residues 74–86; sequence STPLWHLVFLLDV. Residues 87–107 form a helical membrane-spanning segment; that stretch reads FMTLLLTSSISVALAIADVGK. Residues 108-130 are Extracellular-facing; sequence KGNSHAGWLPVCGQVPEFCDHVT. Residues 131–151 form a helical membrane-spanning segment; the sequence is GALIAGFSAAVLYLVLLLFSI. The Cytoplasmic segment spans residues 152–159; the sequence is HAVLNPKP.

This sequence belongs to the Casparian strip membrane proteins (CASP) family. As to quaternary structure, homodimer and heterodimers.

It is found in the cell membrane. The polypeptide is CASP-like protein 1C1 (Vitis vinifera (Grape)).